A 516-amino-acid polypeptide reads, in one-letter code: 2,3-bisphosphoglycerate-independent phosphoglycerate mutase (516 aa).

2 residues coordinate Mn(2+): D15 and S65. S65 serves as the catalytic Phosphoserine intermediate. Substrate contacts are provided by residues H126, 156–157 (RD), R188, R194, 263–266 (RADR), and K336. Mn(2+) is bound by residues D403, H407, D444, H445, and H463.

This sequence belongs to the BPG-independent phosphoglycerate mutase family. Monomer. It depends on Mn(2+) as a cofactor.

The enzyme catalyses (2R)-2-phosphoglycerate = (2R)-3-phosphoglycerate. It functions in the pathway carbohydrate degradation; glycolysis; pyruvate from D-glyceraldehyde 3-phosphate: step 3/5. Functionally, catalyzes the interconversion of 2-phosphoglycerate and 3-phosphoglycerate. The protein is 2,3-bisphosphoglycerate-independent phosphoglycerate mutase of Francisella tularensis subsp. holarctica (strain OSU18).